Consider the following 182-residue polypeptide: Tropomyosin-like protein (182 aa).

Residues 1-68 adopt a coiled-coil conformation; it reads FDRYNQILDE…ELEQRRTEQQ (68 aa). The segment covering 32–66 has biased composition (basic and acidic residues); that stretch reads DEETKKIKQEEAEMKKKIEGEASRKKLELEQRRTE. 2 disordered regions span residues 32 to 81 and 140 to 160; these read DEET…GSTD and DQPA…DAGL. Residues 140–153 are compositionally biased toward low complexity; that stretch reads DQPAQAGPEPAAPA.

Its subcellular location is the cytoplasm. The protein resides in the cytoskeleton. This is Tropomyosin-like protein from Pichia angusta (Yeast).